A 358-amino-acid chain; its full sequence is Bi-functional coumaroyl CoA and feruloyl CoA ortho-hydroxylase F6H2-1-1 (358 aa).

The region spanning 207–308 is the Fe2OG dioxygenase domain; sequence GSRRININYY…RISVPVFVNP (102 aa). Position 216 (Y216) interacts with 2-oxoglutarate. Fe cation contacts are provided by H231, D233, and H289. Residues R299 and S301 each contribute to the 2-oxoglutarate site.

This sequence belongs to the iron/ascorbate-dependent oxidoreductase family. The cofactor is L-ascorbate. Requires Fe(2+) as cofactor. Mostly expressed in underground stems and stems, and, at low levels, in tubers, leaves and petioles.

It carries out the reaction (E)-4-coumaroyl-CoA + 2-oxoglutarate + O2 = (E)-2,4-dihydroxycinnamoyl-CoA + succinate + CO2. The enzyme catalyses (E)-feruloyl-CoA + 2-oxoglutarate + O2 = (E)-6-hydroxyferuloyl-CoA + succinate + CO2. Its pathway is phenylpropanoid metabolism. In terms of biological role, 2-oxoglutarate (OG)- and Fe(II)-dependent dioxygenase (2OGD) involved in scopoletin and umbelliferone biosynthesis. Converts feruloyl CoA into 6'-hydroxyferuloyl CoA, and p-coumaroyl CoA into 2,4-dihydroxycinnamoyl-CoA, but has no activity with caffeoyl-CoA. This chain is Bi-functional coumaroyl CoA and feruloyl CoA ortho-hydroxylase F6H2-1-1, found in Ipomoea batatas (Sweet potato).